Reading from the N-terminus, the 150-residue chain is Deoxyuridine 5'-triphosphate nucleotidohydrolase (150 aa).

Substrate-binding positions include 69 to 71 (RSG), Asn82, 86 to 88 (LID), and Met96.

This sequence belongs to the dUTPase family. The cofactor is Mg(2+).

The catalysed reaction is dUTP + H2O = dUMP + diphosphate + H(+). It participates in pyrimidine metabolism; dUMP biosynthesis; dUMP from dCTP (dUTP route): step 2/2. This enzyme is involved in nucleotide metabolism: it produces dUMP, the immediate precursor of thymidine nucleotides and it decreases the intracellular concentration of dUTP so that uracil cannot be incorporated into DNA. This is Deoxyuridine 5'-triphosphate nucleotidohydrolase from Acinetobacter baumannii (strain AB307-0294).